An 83-amino-acid chain; its full sequence is Mu-theraphotoxin-Hhn2j 4 (83 aa).

An N-terminal signal peptide occupies residues 1-21; sequence MKASMFLALAGSVLLFVVGYA. Residues 22–48 constitute a propeptide that is removed on maturation; that stretch reads SESEEKEFPIELLSKIFAVDVFKGEER. 3 cysteine pairs are disulfide-bonded: C50/C65, C57/C70, and C64/C77. A Leucine amide modification is found at L81.

It belongs to the neurotoxin 10 (Hwtx-1) family. 15 (Hntx-3) subfamily. As to quaternary structure, monomer. Expressed by the venom gland.

The protein resides in the secreted. Its function is as follows. Lethal neurotoxin. Selectively blocks tetrodotoxin-sensitive voltage-gated sodium channels (Nav). Does not affect tetrodotoxin-resistant voltage-gated sodium channels or calcium channels. This chain is Mu-theraphotoxin-Hhn2j 4, found in Cyriopagopus hainanus (Chinese bird spider).